Reading from the N-terminus, the 433-residue chain is 3-phosphoshikimate 1-carboxyvinyltransferase (433 aa).

Positions 23, 24, and 28 each coordinate 3-phosphoshikimate. Lysine 23 contributes to the phosphoenolpyruvate binding site. Phosphoenolpyruvate contacts are provided by glycine 93 and arginine 121. The 3-phosphoshikimate site is built by serine 167, glutamine 169, aspartate 318, and lysine 345. Glutamine 169 is a binding site for phosphoenolpyruvate. The active-site Proton acceptor is the aspartate 318. Residues arginine 349 and arginine 390 each coordinate phosphoenolpyruvate.

It belongs to the EPSP synthase family. In terms of assembly, monomer.

It is found in the cytoplasm. It catalyses the reaction 3-phosphoshikimate + phosphoenolpyruvate = 5-O-(1-carboxyvinyl)-3-phosphoshikimate + phosphate. It participates in metabolic intermediate biosynthesis; chorismate biosynthesis; chorismate from D-erythrose 4-phosphate and phosphoenolpyruvate: step 6/7. Functionally, catalyzes the transfer of the enolpyruvyl moiety of phosphoenolpyruvate (PEP) to the 5-hydroxyl of shikimate-3-phosphate (S3P) to produce enolpyruvyl shikimate-3-phosphate and inorganic phosphate. The polypeptide is 3-phosphoshikimate 1-carboxyvinyltransferase (Nitratiruptor sp. (strain SB155-2)).